The following is a 178-amino-acid chain: Fimbrial adapter PapK (178 aa).

Positions 1-21 are cleaved as a signal peptide; the sequence is MIKSTGALLLFAALSAGQAIA.

The protein localises to the secreted. It localises to the fimbrium. Functionally, adapter that links the pilus rod to the base of the tip fibrillum. Regulates the length of the tip fibrillum and joins it to the pilus rod. Pili are polar filaments radiating from the surface of the bacterium to a length of 0.5-1.5 micrometers and numbering 100-300 per cell, and enable bacteria to colonize the epithelium of specific host organs. The sequence is that of Fimbrial adapter PapK (papK) from Escherichia coli O6:H1 (strain CFT073 / ATCC 700928 / UPEC).